A 152-amino-acid chain; its full sequence is SsrA-binding protein (152 aa).

This sequence belongs to the SmpB family.

It is found in the cytoplasm. Required for rescue of stalled ribosomes mediated by trans-translation. Binds to transfer-messenger RNA (tmRNA), required for stable association of tmRNA with ribosomes. tmRNA and SmpB together mimic tRNA shape, replacing the anticodon stem-loop with SmpB. tmRNA is encoded by the ssrA gene; the 2 termini fold to resemble tRNA(Ala) and it encodes a 'tag peptide', a short internal open reading frame. During trans-translation Ala-aminoacylated tmRNA acts like a tRNA, entering the A-site of stalled ribosomes, displacing the stalled mRNA. The ribosome then switches to translate the ORF on the tmRNA; the nascent peptide is terminated with the 'tag peptide' encoded by the tmRNA and targeted for degradation. The ribosome is freed to recommence translation, which seems to be the essential function of trans-translation. The chain is SsrA-binding protein from Rickettsia bellii (strain RML369-C).